Here is a 70-residue protein sequence, read N- to C-terminus: Bowman-Birk type proteinase inhibitor A7 (70 aa).

4 cysteine pairs are disulfide-bonded: Cys12-Cys31, Cys18-Cys29, Cys38-Cys45, and Cys42-Cys59.

The protein belongs to the Bowman-Birk serine protease inhibitor family. In terms of tissue distribution, expressed in bulb (at protein level).

Serine protease inhibitor. Strongly inhibits trypsin (Ki = 7.1 nM) and almost completely inhibits elastase. Also inhibits chymotrypsin (Ki = 19 nM). Does not inhibit bacterial subtilisin. This is Bowman-Birk type proteinase inhibitor A7 from Hyacinthus orientalis (Common hyacinth).